Consider the following 107-residue polypeptide: MIPGEIKVNHALGDIELNAGRETQTIQVANHGDRPIQIGSHYHFYEVNDALKFERENTLGFRLNIPAGMAVRFEPGQSRTVELVAFSGKREIYGFHGKVMGKLESEN.

Belongs to the urease beta subunit family. Heterotrimer of UreA (gamma), UreB (beta) and UreC (alpha) subunits. Three heterotrimers associate to form the active enzyme.

It localises to the cytoplasm. It catalyses the reaction urea + 2 H2O + H(+) = hydrogencarbonate + 2 NH4(+). Its pathway is nitrogen metabolism; urea degradation; CO(2) and NH(3) from urea (urease route): step 1/1. This is Urease subunit beta from Escherichia coli.